The chain runs to 693 residues: MIEMARLRVYELARKLNMSPKELLQELEELGVNVKSHMSYVDEEMANIIIDLLEEDNRKAKQPSKPKKEKGEEEVEKEVVEKKKKKKITLKPDELKLDIIAEKIGVPQNKIIQDMFVKRGIALRPGQILKLEEVEQILKEYKIEIEIEEEQQTSVEEVDEFELLEKRYQELYEKEKDKLVPRPPVVTVMGHVDHGKTTLLDRIRSTRVAEREEGGITQSIGAYQVEVNGKKITFIDTPGHELFTEMRARGAQATDIVVLVVAADDGVMPQTIEAYNHAKAANVPIIVAINKIDKPNANVEKTKQELVEKLGLIPEEWGGDTIVVPISARTGQGVDELLEMILLVAEMNEIKCYPEGPARAVIIESKLDKKMGPVASVIVKDGVLKVGDAVVASNTYGRVRNLFDDNMRPIREAYPSQPVMILGFEDVPDVHSNVYVVESAEKAKEIVEKRLQRLEAQKQSRKHINLEELMKMMQEKEKKVLNLILKADTYGSVAALKNAINKLQSKEIELNIVHAGVGEISTSDVMLAAAVDGVILGFRVKVNNQARRLAEQEGVDVRTYSIIYKLVEDLKLALEGMLEPEEVEEVIGHGEIRKVFKISKVGKVAGVQMLDGKADRNGFVRIYRNGQLVFEGKIESLKHYKEDVNVVEAPQECGIKFAGFDDIQEGDELEFYVIRKVKRKPTFVEEQADQEQK.

The tr-type G domain occupies Pro-181–Glu-349. Residues Gly-190 to Thr-197 form a G1 region. Gly-190–Thr-197 contributes to the GTP binding site. A G2 region spans residues Gly-215 to Ser-219. A G3 region spans residues Asp-236–Gly-239. Residues Asp-236–His-240 and Asn-290–Asp-293 each bind GTP. The tract at residues Asn-290–Asp-293 is G4. A G5 region spans residues Ser-327 to Arg-329.

It belongs to the TRAFAC class translation factor GTPase superfamily. Classic translation factor GTPase family. IF-2 subfamily.

The protein localises to the cytoplasm. Its function is as follows. One of the essential components for the initiation of protein synthesis. Protects formylmethionyl-tRNA from spontaneous hydrolysis and promotes its binding to the 30S ribosomal subunits. Also involved in the hydrolysis of GTP during the formation of the 70S ribosomal complex. This is Translation initiation factor IF-2 from Thermotoga petrophila (strain ATCC BAA-488 / DSM 13995 / JCM 10881 / RKU-1).